The sequence spans 118 residues: Small ribosomal subunit protein uS13 (118 aa).

The disordered stretch occupies residues 94-118 (SLPLRGQRTKTNARTRKGPRKPIKK).

It belongs to the universal ribosomal protein uS13 family. Part of the 30S ribosomal subunit. Forms a loose heterodimer with protein S19. Forms two bridges to the 50S subunit in the 70S ribosome.

Its function is as follows. Located at the top of the head of the 30S subunit, it contacts several helices of the 16S rRNA. In the 70S ribosome it contacts the 23S rRNA (bridge B1a) and protein L5 of the 50S subunit (bridge B1b), connecting the 2 subunits; these bridges are implicated in subunit movement. Contacts the tRNAs in the A and P-sites. The chain is Small ribosomal subunit protein uS13 from Vibrio parahaemolyticus serotype O3:K6 (strain RIMD 2210633).